A 308-amino-acid polypeptide reads, in one-letter code: Putative protein TIC 214 N-terminal part (308 aa).

6 helical membrane passes run 18–38 (IINS…FSIG), 64–84 (FITG…HLAL), 87–107 (PHTI…WNNH), 124–144 (LSIQ…HFIL), 172–192 (VGWL…LSWI), and 215–235 (IFSI…PSPI). Residues 239–249 (KLKETSEMEER) show a composition bias toward basic and acidic residues. The segment at 239–308 (KLKETSEMEE…RDPSEWKGNI (70 aa)) is disordered. Residues 250-262 (GESEEETDVEIET) show a composition bias toward acidic residues. Residues 264–273 (SETKETKQEQ) show a composition bias toward basic and acidic residues. Acidic residues predominate over residues 275–293 (GSTEEDPSLCSEEQEDPDK). Basic and acidic residues predominate over residues 294–308 (LDETGRDPSEWKGNI).

Belongs to the TIC214 family. Part of the Tic complex.

The protein localises to the plastid. Its subcellular location is the chloroplast inner membrane. Its function is as follows. Involved in protein precursor import into chloroplasts. May be part of an intermediate translocation complex acting as a protein-conducting channel at the inner envelope. The chain is Putative protein TIC 214 N-terminal part from Piper cenocladum (Ant piper).